The sequence spans 98 residues: Putative septation protein SpoVG (98 aa).

The protein belongs to the SpoVG family.

Functionally, could be involved in septation. The protein is Putative septation protein SpoVG of Alkaliphilus metalliredigens (strain QYMF).